Consider the following 327-residue polypeptide: Ran-specific GTPase-activating protein 2 (327 aa).

Disordered regions lie at residues 1–96 and 109–205; these read MSET…KKED and GFGV…KQEV. Over residues 24–83 the composition is skewed to basic and acidic residues; sequence PIDKLDGTPKRPREKDQDEQAEETSDKSEAPNKNDEEKKEEGKKDQEPSHKKIKVDDGKT. The residue at position 31 (threonine 31) is a Phosphothreonine. Residues 122-133 are compositionally biased toward polar residues; it reads ATTSTESLPASD. A compositionally biased stretch (low complexity) spans 140 to 152; that stretch reads FAFGSGLSFGSGF. 2 stretches are compositionally biased toward basic and acidic residues: residues 157–179 and 189–205; these read NKTENNSESEKKATDVDKDKVHS and EDTKDKPKPLKLQKQEV. Position 179 is a phosphoserine (serine 179). The RanBD1 domain maps to 191–327; sequence TKDKPKPLKL…YNIIVKSVPK (137 aa).

Interacts with GSP1, XPO1 and SRM1.

Its subcellular location is the nucleus. Functionally, important for the export of protein containing nuclear export signal (NES) out of the nucleus. Stimulates the GTPase activity of GSP1. The protein is Ran-specific GTPase-activating protein 2 (YRB2) of Saccharomyces cerevisiae (strain ATCC 204508 / S288c) (Baker's yeast).